Here is a 243-residue protein sequence, read N- to C-terminus: Ubiquinone/menaquinone biosynthesis C-methyltransferase UbiE (243 aa).

Residues Thr-69, Asp-90, and Asp-116–Ala-117 contribute to the S-adenosyl-L-methionine site.

The protein belongs to the class I-like SAM-binding methyltransferase superfamily. MenG/UbiE family.

It carries out the reaction a 2-demethylmenaquinol + S-adenosyl-L-methionine = a menaquinol + S-adenosyl-L-homocysteine + H(+). The enzyme catalyses a 2-methoxy-6-(all-trans-polyprenyl)benzene-1,4-diol + S-adenosyl-L-methionine = a 5-methoxy-2-methyl-3-(all-trans-polyprenyl)benzene-1,4-diol + S-adenosyl-L-homocysteine + H(+). It functions in the pathway quinol/quinone metabolism; menaquinone biosynthesis; menaquinol from 1,4-dihydroxy-2-naphthoate: step 2/2. Its pathway is cofactor biosynthesis; ubiquinone biosynthesis. Its function is as follows. Methyltransferase required for the conversion of demethylmenaquinol (DMKH2) to menaquinol (MKH2) and the conversion of 2-polyprenyl-6-methoxy-1,4-benzoquinol (DDMQH2) to 2-polyprenyl-3-methyl-6-methoxy-1,4-benzoquinol (DMQH2). This chain is Ubiquinone/menaquinone biosynthesis C-methyltransferase UbiE, found in Paraburkholderia phymatum (strain DSM 17167 / CIP 108236 / LMG 21445 / STM815) (Burkholderia phymatum).